We begin with the raw amino-acid sequence, 233 residues long: NAD(P)H-hydrate epimerase (233 aa).

The region spanning 10–217 is the YjeF N-terminal domain; it reads AINVDLELFN…ALQRKYELNL (208 aa). 60 to 64 is a (6S)-NADPHX binding site; the sequence is NNGGD. K(+) is bound by residues Asn61 and Asp125. (6S)-NADPHX-binding positions include 129 to 135 and Asp158; that span reads GFSFKPP. Ser161 provides a ligand contact to K(+).

It belongs to the NnrE/AIBP family. It depends on K(+) as a cofactor.

It carries out the reaction (6R)-NADHX = (6S)-NADHX. The enzyme catalyses (6R)-NADPHX = (6S)-NADPHX. In terms of biological role, catalyzes the epimerization of the S- and R-forms of NAD(P)HX, a damaged form of NAD(P)H that is a result of enzymatic or heat-dependent hydration. This is a prerequisite for the S-specific NAD(P)H-hydrate dehydratase to allow the repair of both epimers of NAD(P)HX. This is NAD(P)H-hydrate epimerase from Drosophila grimshawi (Hawaiian fruit fly).